An 84-amino-acid chain; its full sequence is SPbeta prophage-derived uncharacterized protein YomY (84 aa).

This Bacillus subtilis (strain 168) protein is SPbeta prophage-derived uncharacterized protein YomY (yomY).